The sequence spans 958 residues: DNA repair and recombination protein RDH54 (958 aa).

Residues 189-217 are disordered; that stretch reads EALSQNMGNPSPPTTSTTETVPSTKNDGG. The span at 202 to 212 shows a compositional bias: low complexity; sequence TTSTTETVPST. In terms of domain architecture, Helicase ATP-binding spans 333 to 521; it reads LENDSDISGC…FTIIDFINPG (189 aa). 380–387 contacts ATP; the sequence is IPLTGLCK. A DEGH box motif is present at residues 506–509; sequence NDLN. Lys-649 is covalently cross-linked (Glycyl lysine isopeptide (Lys-Gly) (interchain with G-Cter in ubiquitin)). Residues 665–824 enclose the Helicase C-terminal domain; it reads KLKVLMTLLE…DSEMRNKESS (160 aa).

Belongs to the SNF2/RAD54 helicase family. In terms of assembly, interacts with RAD51 and DMC1.

It is found in the nucleus. The enzyme catalyses ATP + H2O = ADP + phosphate + H(+). In terms of biological role, involved in the recombinational repair of double-strand breaks (DSB) in DNA during mitosis and meiosis. Has DNA dependent ATPase activity. Promotes D-loop (displacement loop) formation with RAD51 recombinase. Modifies the topology of double-stranded DNA during the D-loop reaction to facilitate the invasion of the homologous duplex molecule by the initiating single-stranded DNA substrate. Required for adaptation from G2/M checkpoint arrest induced by a double strand break, by participating in monitoring the extent of single-stranded DNA produced by resection of DNA ends. This role is distinct from its roles in recombination. Promotes colocalization of RAD51 and DMC1 during meiotic recombination. Involved in crossover interference. The chain is DNA repair and recombination protein RDH54 (RDH54) from Saccharomyces cerevisiae (strain ATCC 204508 / S288c) (Baker's yeast).